A 40-amino-acid polypeptide reads, in one-letter code: Photosystem II reaction center protein J (40 aa).

Residues Ile8–Phe28 traverse the membrane as a helical segment.

This sequence belongs to the PsbJ family. In terms of assembly, PSII is composed of 1 copy each of membrane proteins PsbA, PsbB, PsbC, PsbD, PsbE, PsbF, PsbH, PsbI, PsbJ, PsbK, PsbL, PsbM, PsbT, PsbX, PsbY, PsbZ, Psb30/Ycf12, at least 3 peripheral proteins of the oxygen-evolving complex and a large number of cofactors. It forms dimeric complexes.

It localises to the plastid. The protein localises to the chloroplast thylakoid membrane. Its function is as follows. One of the components of the core complex of photosystem II (PSII). PSII is a light-driven water:plastoquinone oxidoreductase that uses light energy to abstract electrons from H(2)O, generating O(2) and a proton gradient subsequently used for ATP formation. It consists of a core antenna complex that captures photons, and an electron transfer chain that converts photonic excitation into a charge separation. This Acorus calamus (Sweet flag) protein is Photosystem II reaction center protein J.